A 239-amino-acid polypeptide reads, in one-letter code: Ribonuclease PH (239 aa).

Phosphate is bound by residues Arg-86 and Gly-124–Arg-126.

This sequence belongs to the RNase PH family. In terms of assembly, homohexameric ring arranged as a trimer of dimers.

The enzyme catalyses tRNA(n+1) + phosphate = tRNA(n) + a ribonucleoside 5'-diphosphate. In terms of biological role, phosphorolytic 3'-5' exoribonuclease that plays an important role in tRNA 3'-end maturation. Removes nucleotide residues following the 3'-CCA terminus of tRNAs; can also add nucleotides to the ends of RNA molecules by using nucleoside diphosphates as substrates, but this may not be physiologically important. Probably plays a role in initiation of 16S rRNA degradation (leading to ribosome degradation) during starvation. This is Ribonuclease PH from Aromatoleum aromaticum (strain DSM 19018 / LMG 30748 / EbN1) (Azoarcus sp. (strain EbN1)).